The primary structure comprises 513 residues: ATP synthase subunit alpha (513 aa).

Residue 169-176 participates in ATP binding; the sequence is GDRQCGKT.

Belongs to the ATPase alpha/beta chains family. In terms of assembly, F-type ATPases have 2 components, CF(1) - the catalytic core - and CF(0) - the membrane proton channel. CF(1) has five subunits: alpha(3), beta(3), gamma(1), delta(1), epsilon(1). CF(0) has three main subunits: a(1), b(2) and c(9-12). The alpha and beta chains form an alternating ring which encloses part of the gamma chain. CF(1) is attached to CF(0) by a central stalk formed by the gamma and epsilon chains, while a peripheral stalk is formed by the delta and b chains.

The protein resides in the cell inner membrane. It catalyses the reaction ATP + H2O + 4 H(+)(in) = ADP + phosphate + 5 H(+)(out). Its function is as follows. Produces ATP from ADP in the presence of a proton gradient across the membrane. The alpha chain is a regulatory subunit. This Alteromonas mediterranea (strain DSM 17117 / CIP 110805 / LMG 28347 / Deep ecotype) protein is ATP synthase subunit alpha.